The following is a 124-amino-acid chain: KESAAAKFERQHMDPSPSSASSSNYCNQMMQSRNLTQDRCKPVNTFVHESLADVQAVCFQKNVICKNGQSNCYQSNSAMHITDCRESGNSKYPNCVYKTTQAEKHIIVACEGNPYVPVHFDASV.

A compositionally biased stretch (basic and acidic residues) spans 1–13 (KESAAAKFERQHM). The interval 1–25 (KESAAAKFERQHMDPSPSSASSSNY) is disordered. Substrate-binding residues include Lys7 and Arg10. Catalysis depends on His12, which acts as the Proton acceptor. Disulfide bonds link Cys26-Cys84, Cys40-Cys95, Cys58-Cys110, and Cys65-Cys72. An N-linked (GlcNAc...) asparagine; partial glycan is attached at Asn34. Substrate-binding positions include 41-45 (KPVNT), Lys66, and Arg85. The active-site Proton donor is the His119.

Belongs to the pancreatic ribonuclease family. As to quaternary structure, monomer. Interacts with and forms tight 1:1 complexes with RNH1. Dimerization of two such complexes may occur. Interaction with RNH1 inhibits this protein. Pancreas.

The protein resides in the secreted. The catalysed reaction is an [RNA] containing cytidine + H2O = an [RNA]-3'-cytidine-3'-phosphate + a 5'-hydroxy-ribonucleotide-3'-[RNA].. The enzyme catalyses an [RNA] containing uridine + H2O = an [RNA]-3'-uridine-3'-phosphate + a 5'-hydroxy-ribonucleotide-3'-[RNA].. Functionally, endonuclease that catalyzes the cleavage of RNA on the 3' side of pyrimidine nucleotides. Acts on single-stranded and double-stranded RNA. The polypeptide is Ribonuclease pancreatic (RNASE1) (Capreolus capreolus (European roe deer)).